We begin with the raw amino-acid sequence, 451 residues long: Glucose-6-phosphate isomerase (451 aa).

A Phosphothreonine modification is found at Thr38. Glu290 functions as the Proton donor in the catalytic mechanism. Catalysis depends on residues His311 and Lys425.

Belongs to the GPI family.

Its subcellular location is the cytoplasm. The enzyme catalyses alpha-D-glucose 6-phosphate = beta-D-fructose 6-phosphate. The protein operates within carbohydrate biosynthesis; gluconeogenesis. It participates in carbohydrate degradation; glycolysis; D-glyceraldehyde 3-phosphate and glycerone phosphate from D-glucose: step 2/4. In terms of biological role, catalyzes the reversible isomerization of glucose-6-phosphate to fructose-6-phosphate. In Shouchella clausii (strain KSM-K16) (Alkalihalobacillus clausii), this protein is Glucose-6-phosphate isomerase.